Here is a 243-residue protein sequence, read N- to C-terminus: Calcium-binding protein LPS1-beta (243 aa).

EF-hand domains lie at 15 to 49 (EVID…DCPE), 47 to 82 (CPEE…YTKE), 85 to 120 (YSSD…ISTK), 121 to 156 (LVEG…KLPL), 157 to 189 (CFKK…NLPG), 191 to 226 (YSEE…LSKD), and 227 to 243 (DIKN…NGKI). Ca(2+)-binding residues include D29, N31, D33, T35, E40, D60, N62, D64, R66, E71, D98, D100, N102, R104, E109, D134, D136, D138, H140, E145, D167, N169, D171, S173, E178, D204, N206, D208, R210, and E215.

As to expression, aboral ectoderm, a squamous epithelium covering the surface of the late stage embryo and larva.

Functionally, calcium-binding protein involved in larval development and metamorphosis. Likely to function as calcium buffers mediating the transport of calcium from the sea water to the blastocoel where calcium is required for skeleton formation. This is Calcium-binding protein LPS1-beta from Lytechinus pictus (Painted sea urchin).